Consider the following 1025-residue polypeptide: Glycine dehydrogenase (decarboxylating), mitochondrial (1025 aa).

Residues Met-1–Arg-35 constitute a mitochondrion transit peptide. Residues Ala-16–Ala-51 are disordered. Residues Ser-38–Gly-50 are compositionally biased toward gly residues. Lys-452, Lys-519, Lys-653, and Lys-669 each carry N6-acetyllysine. N6-(pyridoxal phosphate)lysine is present on Lys-759.

Belongs to the GcvP family. Interacts with GCSH. Homodimer. The glycine cleavage system is composed of four proteins: P (GLDC), T (GCST), L (DLD) and H (GCSH). Requires pyridoxal 5'-phosphate as cofactor.

The protein resides in the mitochondrion. It carries out the reaction N(6)-[(R)-lipoyl]-L-lysyl-[glycine-cleavage complex H protein] + glycine + H(+) = N(6)-[(R)-S(8)-aminomethyldihydrolipoyl]-L-lysyl-[glycine-cleavage complex H protein] + CO2. Stimulated by lipoic acid. Inhibited in presence of methylamine. Its function is as follows. The glycine cleavage system catalyzes the degradation of glycine. The P protein (GLDC) binds the alpha-amino group of glycine through its pyridoxal phosphate cofactor; CO(2) is released and the remaining methylamine moiety is then transferred to the lipoamide cofactor of the H protein (GCSH). The chain is Glycine dehydrogenase (decarboxylating), mitochondrial from Mus musculus (Mouse).